Consider the following 95-residue polypeptide: Aspartyl/glutamyl-tRNA(Asn/Gln) amidotransferase subunit C (95 aa).

The protein belongs to the GatC family. Heterotrimer of A, B and C subunits.

It catalyses the reaction L-glutamyl-tRNA(Gln) + L-glutamine + ATP + H2O = L-glutaminyl-tRNA(Gln) + L-glutamate + ADP + phosphate + H(+). The enzyme catalyses L-aspartyl-tRNA(Asn) + L-glutamine + ATP + H2O = L-asparaginyl-tRNA(Asn) + L-glutamate + ADP + phosphate + 2 H(+). Allows the formation of correctly charged Asn-tRNA(Asn) or Gln-tRNA(Gln) through the transamidation of misacylated Asp-tRNA(Asn) or Glu-tRNA(Gln) in organisms which lack either or both of asparaginyl-tRNA or glutaminyl-tRNA synthetases. The reaction takes place in the presence of glutamine and ATP through an activated phospho-Asp-tRNA(Asn) or phospho-Glu-tRNA(Gln). This chain is Aspartyl/glutamyl-tRNA(Asn/Gln) amidotransferase subunit C, found in Chromohalobacter salexigens (strain ATCC BAA-138 / DSM 3043 / CIP 106854 / NCIMB 13768 / 1H11).